A 161-amino-acid polypeptide reads, in one-letter code: Disulfide bond formation protein B (161 aa).

Residues 1–8 lie on the Cytoplasmic side of the membrane; it reads MQANSRTY. A helical transmembrane segment spans residues 9–25; sequence FLLIAIVSFAMVGAALY. Topologically, residues 26–43 are periplasmic; sequence MQYAENLQPCPLCIMQRF. Cysteine 35 and cysteine 38 are joined by a disulfide. Residues 44–58 traverse the membrane as a helical segment; the sequence is AFIGIGIFSLLAVIA. Over 59 to 63 the chain is Cytoplasmic; it reads QNTRT. A helical transmembrane segment spans residues 64-81; sequence LWQGLGMLSGVGGIAVAG. Residues 82 to 136 lie on the Periplasmic side of the membrane; the sequence is YQVALLMNPKASCGIDPLENWVNSLPTAKLLPQVFYSDGLCTAPTPPILGLSIPA. A disulfide bridge links cysteine 94 with cysteine 122. Residues 137-155 form a helical membrane-spanning segment; the sequence is WSLIWLLILTLTLAVGLIR. The Cytoplasmic segment spans residues 156-161; the sequence is REKHFR.

Belongs to the DsbB family.

It is found in the cell inner membrane. Its function is as follows. Required for disulfide bond formation in some periplasmic proteins. Acts by oxidizing the DsbA protein. The protein is Disulfide bond formation protein B of Cupriavidus metallidurans (strain ATCC 43123 / DSM 2839 / NBRC 102507 / CH34) (Ralstonia metallidurans).